The following is a 119-amino-acid chain: Large ribosomal subunit protein uL18 (119 aa).

The protein belongs to the universal ribosomal protein uL18 family. Part of the 50S ribosomal subunit; part of the 5S rRNA/L5/L18/L25 subcomplex. Contacts the 5S and 23S rRNAs.

In terms of biological role, this is one of the proteins that bind and probably mediate the attachment of the 5S RNA into the large ribosomal subunit, where it forms part of the central protuberance. This Clostridium botulinum (strain 657 / Type Ba4) protein is Large ribosomal subunit protein uL18.